The primary structure comprises 348 residues: uncharacterized protein (348 aa).

A disordered region spans residues Ser-132 to Leu-348. The segment covering Ser-161 to Arg-178 has biased composition (low complexity). Over residues Ser-192–Pro-207 the composition is skewed to polar residues. The span at Ala-227–Pro-273 shows a compositional bias: low complexity. The span at Ala-274 to Arg-287 shows a compositional bias: pro residues. Positions Thr-288 to Arg-310 are enriched in low complexity.

This is an uncharacterized protein from Streptomyces fradiae (Streptomyces roseoflavus).